A 131-amino-acid polypeptide reads, in one-letter code: Fumarate reductase subunit C (131 aa).

Transmembrane regions (helical) follow at residues 30–50 (EGTC…VFAL), 58–78 (AGFV…VTLI), and 109–129 (IVRG…AVAL).

The protein belongs to the FrdC family. In terms of assembly, part of an enzyme complex containing four subunits: a flavoprotein (FrdA), an iron-sulfur protein (FrdB), and two hydrophobic anchor proteins (FrdC and FrdD).

Its subcellular location is the cell inner membrane. Its function is as follows. Two distinct, membrane-bound, FAD-containing enzymes are responsible for the catalysis of fumarate and succinate interconversion; fumarate reductase is used in anaerobic growth, and succinate dehydrogenase is used in aerobic growth. Anchors the catalytic components of the fumarate reductase complex to the cell inner membrane, binds quinones. The sequence is that of Fumarate reductase subunit C from Proteus mirabilis (strain HI4320).